The chain runs to 118 residues: Hydrogenase maturation factor HypA (118 aa).

Ni(2+) is bound at residue histidine 2. The Zn(2+) site is built by cysteine 73, cysteine 76, cysteine 93, and cysteine 96.

It belongs to the HypA/HybF family.

Its function is as follows. Involved in the maturation of [NiFe] hydrogenases. Required for nickel insertion into the metal center of the hydrogenase. In Lawsonia intracellularis (strain PHE/MN1-00), this protein is Hydrogenase maturation factor HypA.